The sequence spans 304 residues: Cbb3-type cytochrome c oxidase subunit CcoP (304 aa).

Transmembrane regions (helical) follow at residues leucine 11–alanine 31 and tryptophan 61–proline 81. Cytochrome c domains are found at residues glutamine 129–serine 209 and valine 216–serine 296. 8 residues coordinate heme c: cysteine 142, cysteine 145, histidine 146, methionine 185, cysteine 228, cysteine 231, histidine 232, and methionine 273.

It belongs to the CcoP / FixP family. Component of the cbb3-type cytochrome c oxidase at least composed of CcoN, CcoO, CcoQ and CcoP. Heme c is required as a cofactor.

The protein resides in the cell inner membrane. It functions in the pathway energy metabolism; oxidative phosphorylation. Functionally, C-type cytochrome. Part of the cbb3-type cytochrome c oxidase complex. CcoP subunit is required for transferring electrons from donor cytochrome c via its heme groups to CcoO subunit. From there, electrons are shuttled to the catalytic binuclear center of CcoN subunit where oxygen reduction takes place. The complex also functions as a proton pump. This chain is Cbb3-type cytochrome c oxidase subunit CcoP, found in Rubrivivax gelatinosus (Rhodocyclus gelatinosus).